Here is a 309-residue protein sequence, read N- to C-terminus: Porphobilinogen deaminase (309 aa).

Cys241 bears the S-(dipyrrolylmethanemethyl)cysteine mark.

It belongs to the HMBS family. In terms of assembly, monomer. The cofactor is dipyrromethane.

It catalyses the reaction 4 porphobilinogen + H2O = hydroxymethylbilane + 4 NH4(+). Its pathway is porphyrin-containing compound metabolism; protoporphyrin-IX biosynthesis; coproporphyrinogen-III from 5-aminolevulinate: step 2/4. Functionally, tetrapolymerization of the monopyrrole PBG into the hydroxymethylbilane pre-uroporphyrinogen in several discrete steps. The sequence is that of Porphobilinogen deaminase from Bacillus cereus (strain G9842).